Reading from the N-terminus, the 255-residue chain is Leucyl/phenylalanyl-tRNA--protein transferase (255 aa).

This sequence belongs to the L/F-transferase family.

Its subcellular location is the cytoplasm. The enzyme catalyses N-terminal L-lysyl-[protein] + L-leucyl-tRNA(Leu) = N-terminal L-leucyl-L-lysyl-[protein] + tRNA(Leu) + H(+). The catalysed reaction is N-terminal L-arginyl-[protein] + L-leucyl-tRNA(Leu) = N-terminal L-leucyl-L-arginyl-[protein] + tRNA(Leu) + H(+). It catalyses the reaction L-phenylalanyl-tRNA(Phe) + an N-terminal L-alpha-aminoacyl-[protein] = an N-terminal L-phenylalanyl-L-alpha-aminoacyl-[protein] + tRNA(Phe). In terms of biological role, functions in the N-end rule pathway of protein degradation where it conjugates Leu, Phe and, less efficiently, Met from aminoacyl-tRNAs to the N-termini of proteins containing an N-terminal arginine or lysine. The protein is Leucyl/phenylalanyl-tRNA--protein transferase of Burkholderia thailandensis (strain ATCC 700388 / DSM 13276 / CCUG 48851 / CIP 106301 / E264).